The chain runs to 263 residues: Hydroxyethylthiazole kinase 1 (263 aa).

Met-42 lines the substrate pocket. Residues Lys-118 and Thr-164 each coordinate ATP. Gly-191 contacts substrate.

Belongs to the Thz kinase family. Mg(2+) is required as a cofactor.

It catalyses the reaction 5-(2-hydroxyethyl)-4-methylthiazole + ATP = 4-methyl-5-(2-phosphooxyethyl)-thiazole + ADP + H(+). It participates in cofactor biosynthesis; thiamine diphosphate biosynthesis; 4-methyl-5-(2-phosphoethyl)-thiazole from 5-(2-hydroxyethyl)-4-methylthiazole: step 1/1. Its function is as follows. Catalyzes the phosphorylation of the hydroxyl group of 4-methyl-5-beta-hydroxyethylthiazole (THZ). In Clostridium botulinum (strain Langeland / NCTC 10281 / Type F), this protein is Hydroxyethylthiazole kinase 1.